Reading from the N-terminus, the 649-residue chain is Acid beta-fructofuranosidase (649 aa).

Topologically, residues 1 to 22 are cytoplasmic; the sequence is MEHHKPLLPTSSHAAPTSSTRK. The propeptide at 1–101 is removed in mature form; it reads MEHHKPLLPT…NLLFAGEGGA (101 aa). A helical; Signal-anchor for type II membrane protein transmembrane segment spans residues 23–43; sequence DLLFVLCGLLFLSSLVAYGGY. Over 44–649 the chain is Lumenal; it reads RASGVPHAHL…PFPFNPDQKS (606 aa). Positions 52 to 75 are disordered; that stretch reads HLSSPTSNHQQDHQSPTSLPSSKW. Residues 54–72 show a composition bias toward polar residues; it reads SSPTSNHQQDHQSPTSLPS. Substrate contacts are provided by residues 127–130, Q146, W154, and 189–190; these read WMND and WT. Residue D130 is part of the active site. N210 carries N-linked (GlcNAc...) (complex) asparagine glycosylation. Residue 253-254 participates in substrate binding; the sequence is RD. N-linked (GlcNAc...) (complex) asparagine glycosylation occurs at N275. Substrate contacts are provided by E308 and D341. Cysteines 498 and 546 form a disulfide. An N-linked (GlcNAc...) (high mannose) asparagine glycan is attached at N618.

This sequence belongs to the glycosyl hydrolase 32 family. In terms of assembly, present in two forms, a 70 kDa monomer and a heterodimer of the 30 kDa and 38 kDa subunits. The ratio of the levels of the two forms within cells appears to be regulated developmentally.

The protein resides in the membrane. Its subcellular location is the vacuole lumen. The catalysed reaction is Hydrolysis of terminal non-reducing beta-D-fructofuranoside residues in beta-D-fructofuranosides.. Its pathway is glycan biosynthesis; sucrose metabolism. Functionally, possible role in the continued mobilization of sucrose to sink organs. This Vigna radiata var. radiata (Mung bean) protein is Acid beta-fructofuranosidase (INVA).